A 571-amino-acid polypeptide reads, in one-letter code: Proline--tRNA ligase (571 aa).

Belongs to the class-II aminoacyl-tRNA synthetase family. ProS type 1 subfamily. As to quaternary structure, homodimer.

The protein localises to the cytoplasm. The catalysed reaction is tRNA(Pro) + L-proline + ATP = L-prolyl-tRNA(Pro) + AMP + diphosphate. Catalyzes the attachment of proline to tRNA(Pro) in a two-step reaction: proline is first activated by ATP to form Pro-AMP and then transferred to the acceptor end of tRNA(Pro). As ProRS can inadvertently accommodate and process non-cognate amino acids such as alanine and cysteine, to avoid such errors it has two additional distinct editing activities against alanine. One activity is designated as 'pretransfer' editing and involves the tRNA(Pro)-independent hydrolysis of activated Ala-AMP. The other activity is designated 'posttransfer' editing and involves deacylation of mischarged Ala-tRNA(Pro). The misacylated Cys-tRNA(Pro) is not edited by ProRS. The sequence is that of Proline--tRNA ligase from Ligilactobacillus salivarius (strain UCC118) (Lactobacillus salivarius).